Here is a 276-residue protein sequence, read N- to C-terminus: ATP synthase subunit a (276 aa).

6 consecutive transmembrane segments (helical) span residues Ile-27–Gly-47, Gly-61–Ala-81, Leu-120–Leu-140, Asp-159–Leu-179, Leu-225–Leu-245, and Gly-246–His-266.

The protein belongs to the ATPase A chain family. As to quaternary structure, F-type ATPases have 2 components, CF(1) - the catalytic core - and CF(0) - the membrane proton channel. CF(1) has five subunits: alpha(3), beta(3), gamma(1), delta(1), epsilon(1). CF(0) has four main subunits: a, b, b' and c.

Its subcellular location is the cellular thylakoid membrane. Key component of the proton channel; it plays a direct role in the translocation of protons across the membrane. This Synechocystis sp. (strain ATCC 27184 / PCC 6803 / Kazusa) protein is ATP synthase subunit a.